An 855-amino-acid polypeptide reads, in one-letter code: Dynein axonemal assembly factor 5 (855 aa).

An N-acetylalanine modification is found at Ala-2. HEAT repeat units follow at residues Gly-71–Arg-109, His-202–Gly-240, Lys-241–Asp-278, Tyr-280–Lys-318, Phe-354–Arg-376, Val-377–Ala-414, Gly-599–Asp-638, Arg-696–Gly-734, Pro-738–Gly-776, and Gln-784–Asp-822.

It belongs to the DNAAF5 family. In terms of assembly, interacts with DNAI2; probably involved in outer arm dynein assembly. Expressed in nasal epithelium and lung epithelium by ciliated cells (at protein level).

The protein resides in the cytoplasm. It is found in the dynein axonemal particle. Its function is as follows. Cytoplasmic protein involved in the delivery of the dynein machinery to the motile cilium. It is required for the assembly of the axonemal dynein inner and outer arms, two structures attached to the peripheral outer doublet A microtubule of the axoneme, that play a crucial role in cilium motility. This chain is Dynein axonemal assembly factor 5, found in Homo sapiens (Human).